A 420-amino-acid chain; its full sequence is UDP-N-acetylglucosamine 1-carboxyvinyltransferase (420 aa).

22–23 is a phosphoenolpyruvate binding site; that stretch reads KN. Residue Arg93 participates in UDP-N-acetyl-alpha-D-glucosamine binding. Cys117 (proton donor) is an active-site residue. 2-(S-cysteinyl)pyruvic acid O-phosphothioketal is present on Cys117. Asp307 and Ile329 together coordinate UDP-N-acetyl-alpha-D-glucosamine.

It belongs to the EPSP synthase family. MurA subfamily.

It localises to the cytoplasm. The catalysed reaction is phosphoenolpyruvate + UDP-N-acetyl-alpha-D-glucosamine = UDP-N-acetyl-3-O-(1-carboxyvinyl)-alpha-D-glucosamine + phosphate. It functions in the pathway cell wall biogenesis; peptidoglycan biosynthesis. Cell wall formation. Adds enolpyruvyl to UDP-N-acetylglucosamine. The sequence is that of UDP-N-acetylglucosamine 1-carboxyvinyltransferase from Saccharophagus degradans (strain 2-40 / ATCC 43961 / DSM 17024).